Reading from the N-terminus, the 444-residue chain is Killer cell immunoglobulin-like receptor 3DL1 (444 aa).

Positions 1–21 (MSLMVVSMACVGLFLVQRAGP) are cleaved as a signal peptide. Topologically, residues 22-340 (HMGGQDKPFL…SKSGNPRHLH (319 aa)) are extracellular. Ig-like C2-type domains lie at 42–102 (GGHV…HPHS), 137–202 (GERV…VTHT), and 237–300 (GESV…FRHS). 3 cysteine pairs are disulfide-bonded: C49/C95, C144/C195, and C244/C293. N-linked (GlcNAc...) asparagine glycosylation is found at N92, N179, and N273. Positions 315-334 (VTGNPSSSWPSPTEPSSKSG) are disordered. The span at 319 to 333 (PSSSWPSPTEPSSKS) shows a compositional bias: low complexity. Residues 341–360 (ILIGTSVVIILFILLLFFLL) form a helical membrane-spanning segment. Topologically, residues 361 to 444 (HLWCSNKKNA…KPRSKVVSCP (84 aa)) are cytoplasmic. Disordered regions lie at residues 375 to 394 (QEPA…QDPE) and 409 to 444 (RKIT…VSCP).

This sequence belongs to the immunoglobulin superfamily.

It is found in the cell membrane. Receptor on natural killer (NK) cells for HLA Bw4 allele. Inhibits the activity of NK cells thus preventing cell lysis. The sequence is that of Killer cell immunoglobulin-like receptor 3DL1 from Homo sapiens (Human).